The primary structure comprises 37 residues: Somatostatin-37 (37 aa).

The propeptide occupies 1–2 (AL). A disulfide bridge connects residues Cys-26 and Cys-37.

This sequence belongs to the somatostatin family.

Its subcellular location is the secreted. Its function is as follows. Somatostatin inhibits the release of somatotropin. The sequence is that of Somatostatin-37 (sst) from Petromyzon marinus (Sea lamprey).